Reading from the N-terminus, the 21-residue chain is Fibrinogen beta chain (21 aa).

Gln1 is subject to Pyrrolidone carboxylic acid. Acidic residues predominate over residues 1–11 (QPSYDYDEEED). Positions 1–21 (QPSYDYDEEEDDRAKLRLDAR) are disordered. The residue at position 6 (Tyr6) is a Sulfotyrosine. A compositionally biased stretch (basic and acidic residues) spans 12–21 (DRAKLRLDAR).

As to quaternary structure, heterohexamer; disulfide linked. Contains 2 sets of 3 non-identical chains (alpha, beta and gamma). The 2 heterotrimers are in head to head conformation with the N-termini in a small central domain. In terms of processing, conversion of fibrinogen to fibrin is triggered by thrombin, which cleaves fibrinopeptides A and B from alpha and beta chains, and thus exposes the N-terminal polymerization sites responsible for the formation of the soft clot.

The protein localises to the secreted. In terms of biological role, cleaved by the protease thrombin to yield monomers which, together with fibrinogen alpha (FGA) and fibrinogen gamma (FGG), polymerize to form an insoluble fibrin matrix. Fibrin has a major function in hemostasis as one of the primary components of blood clots. In addition, functions during the early stages of wound repair to stabilize the lesion and guide cell migration during re-epithelialization. Was originally thought to be essential for platelet aggregation, based on in vitro studies using anticoagulated blood. However subsequent studies have shown that it is not absolutely required for thrombus formation in vivo. Enhances expression of SELP in activated platelets. Maternal fibrinogen is essential for successful pregnancy. Fibrin deposition is also associated with infection, where it protects against IFNG-mediated hemorrhage. May also facilitate the antibacterial immune response via both innate and T-cell mediated pathways. This is Fibrinogen beta chain (FGB) from Antilocapra americana (Pronghorn).